The primary structure comprises 324 residues: MFNFANFYQLIAQDTVLQPWLNTLPQQLTDWQNAEHGDIERWIKALKKIPEGCADNIDLKSSVTLSNNTPLIDGERKKLENLLQTFHPWRKGPFTVHDIHIDTEWRSDWKWDRLLPHITPLKNRSVLDVGCGNGYHMWRMLGEDARLCVGIDPSHLFLIQFEAIRKLMGNDQRAHLLPLGIEQLPELNAFDTVFSMGVLYHRRSPLDHLIQLKNQLVAGGELVLETLVIDGDENAVLMPVDRYAQMRNVYFFPSARALKVWLESVGFVDVKIVDECVTTTGEQRSTEWMKHNSLPEYLDPNDSTKTIEGHPAPKRAILIAKKPD.

Carboxy-S-adenosyl-L-methionine is bound by residues lysine 91, tryptophan 105, lysine 110, glycine 130, 152–154 (DPS), 181–182 (IE), methionine 196, tyrosine 200, and arginine 315.

Belongs to the class I-like SAM-binding methyltransferase superfamily. CmoB family. Homotetramer.

The enzyme catalyses carboxy-S-adenosyl-L-methionine + 5-hydroxyuridine(34) in tRNA = 5-carboxymethoxyuridine(34) in tRNA + S-adenosyl-L-homocysteine + H(+). In terms of biological role, catalyzes carboxymethyl transfer from carboxy-S-adenosyl-L-methionine (Cx-SAM) to 5-hydroxyuridine (ho5U) to form 5-carboxymethoxyuridine (cmo5U) at position 34 in tRNAs. This is tRNA U34 carboxymethyltransferase from Aliivibrio fischeri (strain ATCC 700601 / ES114) (Vibrio fischeri).